The following is a 515-amino-acid chain: uncharacterized protein (515 aa).

The segment at 146–171 is disordered; that stretch reads SSEVDRNSETEGTREENSNTSDWDEQ. The segment covering 148–162 has biased composition (basic and acidic residues); it reads EVDRNSETEGTREEN.

Its subcellular location is the cytoplasm. The protein resides in the nucleus. This is an uncharacterized protein from Schizosaccharomyces pombe (strain 972 / ATCC 24843) (Fission yeast).